The following is a 447-amino-acid chain: Tubulin beta chain (447 aa).

Glutamine 11, glutamate 69, serine 138, glycine 142, threonine 143, glycine 144, asparagine 204, and asparagine 226 together coordinate GTP. Glutamate 69 contributes to the Mg(2+) binding site. Residues 425–447 (YQEASISEGEEEYDEEAPLEAEE) are disordered. Residues 432–447 (EGEEEYDEEAPLEAEE) show a composition bias toward acidic residues.

This sequence belongs to the tubulin family. As to quaternary structure, dimer of alpha and beta chains. A typical microtubule is a hollow water-filled tube with an outer diameter of 25 nm and an inner diameter of 15 nM. Alpha-beta heterodimers associate head-to-tail to form protofilaments running lengthwise along the microtubule wall with the beta-tubulin subunit facing the microtubule plus end conferring a structural polarity. Microtubules usually have 13 protofilaments but different protofilament numbers can be found in some organisms and specialized cells. Mg(2+) serves as cofactor.

The protein localises to the cytoplasm. Its subcellular location is the cytoskeleton. In terms of biological role, tubulin is the major constituent of microtubules, a cylinder consisting of laterally associated linear protofilaments composed of alpha- and beta-tubulin heterodimers. Microtubules grow by the addition of GTP-tubulin dimers to the microtubule end, where a stabilizing cap forms. Below the cap, tubulin dimers are in GDP-bound state, owing to GTPase activity of alpha-tubulin. This chain is Tubulin beta chain (tubB), found in Phaeosphaeria nodorum (strain SN15 / ATCC MYA-4574 / FGSC 10173) (Glume blotch fungus).